A 641-amino-acid chain; its full sequence is Glycerol metabolism operon regulatory protein (641 aa).

The interval 1-318 (MTTHTQDIGK…MRQLMTSQLG (318 aa)) is sensor domain. Residues 52–189 (ALLTIAQAAL…AIAREVGNSL (138 aa)) form the GAF domain. A PAS domain is found at 203 to 265 (NQMYGLLESM…MLLRRAIKHA (63 aa)). The Sigma-54 factor interaction domain maps to 327-552 (MSTDDPETRR…LNSIIENIAI (226 aa)). ATP-binding positions include 355 to 362 (GEEGVGKE) and 415 to 424 (ANGGTLFLEK).

Transcriptional activator of the glycerol utilization dha operon. This Citrobacter freundii protein is Glycerol metabolism operon regulatory protein.